A 257-amino-acid chain; its full sequence is Pyridoxal phosphate homeostasis protein (257 aa).

N6-(pyridoxal phosphate)lysine is present on lysine 47.

It belongs to the pyridoxal phosphate-binding protein YggS/PROSC family.

Functionally, pyridoxal 5'-phosphate (PLP)-binding protein, which is involved in PLP homeostasis. The sequence is that of Pyridoxal phosphate homeostasis protein from Mycobacterium leprae (strain TN).